A 318-amino-acid polypeptide reads, in one-letter code: Probable endolytic peptidoglycan transglycosylase RlpA (318 aa).

A signal peptide spans 1 to 21 (MMDKRVVAVAAVLWNVQMLFA). The interval 121–191 (DPNAHASQQR…GVANTTDVPA (71 aa)) is disordered. Residues 125–137 (HASQQRNDRQTSP) show a composition bias toward polar residues.

This sequence belongs to the RlpA family.

In terms of biological role, lytic transglycosylase with a strong preference for naked glycan strands that lack stem peptides. The polypeptide is Probable endolytic peptidoglycan transglycosylase RlpA (Treponema pallidum (strain Nichols)).